The following is a 353-amino-acid chain: MRVLGIETSCDETGIAVYDEYRGLLVHKVYSQGVLHSRYGGVVPELAARDHIRKVIPLIVGSLKQARLISSDIDAVAYTAGPGLIGALLVGASVACSLAYAWNVPVIGVHHMEAHLLTPMLNKKLIISNSTSFSDFIDVIDFPFIALLVSGGHTQLVMVKNIGEYKILGESVDDAVGEVFDKIAVFLGLGYPGGALLSEMAQVGIKGRYIFPKPMINKPGFNFSFSGLKTAVIRAIMSSSNDQQTRADIACGFERAVVETLSVKCYKALKQMKVKYLVISGGVSANTMLRSKLLKMMYSISGKLLCPELEFCTDNGAMVAYTGLIRLKAGLSNRDLSITVKPRWSLESLPSIF.

2 residues coordinate Fe cation: histidine 111 and histidine 115. Residues 148 to 152 (LVSGG), aspartate 181, glycine 194, and asparagine 286 each bind substrate. Position 314 (aspartate 314) interacts with Fe cation.

This sequence belongs to the KAE1 / TsaD family. Requires Fe(2+) as cofactor.

Its subcellular location is the cytoplasm. The enzyme catalyses L-threonylcarbamoyladenylate + adenosine(37) in tRNA = N(6)-L-threonylcarbamoyladenosine(37) in tRNA + AMP + H(+). Its function is as follows. Required for the formation of a threonylcarbamoyl group on adenosine at position 37 (t(6)A37) in tRNAs that read codons beginning with adenine. Is involved in the transfer of the threonylcarbamoyl moiety of threonylcarbamoyl-AMP (TC-AMP) to the N6 group of A37, together with TsaE and TsaB. TsaD likely plays a direct catalytic role in this reaction. This chain is tRNA N6-adenosine threonylcarbamoyltransferase, found in Blochmanniella floridana.